The following is a 380-amino-acid chain: Cytochrome b (380 aa).

4 helical membrane passes run 33–53 (FGSLLGLCLITQLLTGLFLAM), 77–98 (WLIRNMHANGASFFFICLYMHI), 113–133 (WNIGVVLFLLVMMTSFVGYVL), and 178–198 (FFAFHFLFPFVVAAFTMLHLL). Heme b-binding residues include H83 and H97. Heme b contacts are provided by H182 and H196. Residue H201 participates in a ubiquinone binding. 4 helical membrane-spanning segments follow: residues 226–246 (YKDLLGFAVMLLGLTALALFA), 288–308 (LGGVLALLFSILVLMVVPFLH), 320–340 (LTQMLFWVLVADMLVLTWIGG), and 347–367 (FIIIGQVASVLYFSLFLVLFP).

The protein belongs to the cytochrome b family. The cytochrome bc1 complex contains 3 respiratory subunits (MT-CYB, CYC1 and UQCRFS1), 2 core proteins (UQCRC1 and UQCRC2) and probably 6 low-molecular weight proteins. The cofactor is heme b.

The protein localises to the mitochondrion inner membrane. Functionally, component of the ubiquinol-cytochrome c reductase complex (complex III or cytochrome b-c1 complex) that is part of the mitochondrial respiratory chain. The b-c1 complex mediates electron transfer from ubiquinol to cytochrome c. Contributes to the generation of a proton gradient across the mitochondrial membrane that is then used for ATP synthesis. This Gadus morhua (Atlantic cod) protein is Cytochrome b (mt-cyb).